The primary structure comprises 278 residues: 4-deoxy-L-threo-5-hexosulose-uronate ketol-isomerase (278 aa).

The Zn(2+) site is built by His-196, His-198, Glu-203, and His-245.

This sequence belongs to the KduI family. The cofactor is Zn(2+).

It carries out the reaction 5-dehydro-4-deoxy-D-glucuronate = 3-deoxy-D-glycero-2,5-hexodiulosonate. It participates in glycan metabolism; pectin degradation; 2-dehydro-3-deoxy-D-gluconate from pectin: step 4/5. Functionally, catalyzes the isomerization of 5-dehydro-4-deoxy-D-glucuronate to 3-deoxy-D-glycero-2,5-hexodiulosonate. The chain is 4-deoxy-L-threo-5-hexosulose-uronate ketol-isomerase from Salmonella heidelberg (strain SL476).